The sequence spans 168 residues: Photosystem I assembly protein Ycf3 (168 aa).

TPR repeat units lie at residues 35 to 68 (AFTY…EIDP), 72 to 105 (SYIL…NPFL), and 120 to 153 (GEQA…TPGN).

The protein belongs to the Ycf3 family.

The protein localises to the plastid. Its subcellular location is the chloroplast thylakoid membrane. In terms of biological role, essential for the assembly of the photosystem I (PSI) complex. May act as a chaperone-like factor to guide the assembly of the PSI subunits. This is Photosystem I assembly protein Ycf3 from Liriodendron tulipifera (Tuliptree).